Consider the following 321-residue polypeptide: MSAGGEHLKDEGTRRQVVLAGGIAGLVSRFCVAPLDVVKIRLQLQIHSLSDPISHRDVTGPIYKGTLSTMRDIIRQEGITGLWKGNIPAELMYVCYGVIQFSAYRTTTQALAQLDTYRLPPSAESFVAGATAGGLATASTYPLDLLRTRFAAQGTDRVYTSLMSSVRDIARNEGYAGFFRGCSAAVGQIVPYMGLFFATYEALRPPLAQYQDLPFGSGDAAAGVIASVSSKTVMFPLDLIRKRLQVQGPTRQLYIHRNIPEYQGVFNTMKLILRTQGIRGLYRGLTVSLFKAAPASAVTMWTYETSLRLLQDMEVATSKED.

The next 6 membrane-spanning stretches (helical) occupy residues 12–28 (GTRR…GLVS), 91–107 (LMYV…YRTT), 126–146 (FVAG…LDLL), 184–200 (AAVG…FATY), 221–237 (AAGV…MFPL), and 284–301 (GLTV…VTMW). Solcar repeat units lie at residues 12-110 (GTRR…TTQA), 120-206 (PPSA…LRPP), and 214-309 (PFGS…SLRL).

The protein belongs to the mitochondrial carrier (TC 2.A.29) family.

Its subcellular location is the mitochondrion inner membrane. Mitochondrial transporter that mediates uptake of thiamine pyrophosphate (ThPP) into mitochondria. This chain is Mitochondrial thiamine pyrophosphate carrier 1 (tpc1), found in Aspergillus niger (strain ATCC MYA-4892 / CBS 513.88 / FGSC A1513).